The following is a 326-amino-acid chain: Thiazole synthase (326 aa).

Catalysis depends on lysine 168, which acts as the Schiff-base intermediate with DXP. 1-deoxy-D-xylulose 5-phosphate-binding positions include glycine 229, 255 to 256 (AG), and 277 to 278 (NT).

Belongs to the ThiG family. In terms of assembly, homotetramer. Forms heterodimers with either ThiH or ThiS.

It localises to the cytoplasm. It catalyses the reaction [ThiS sulfur-carrier protein]-C-terminal-Gly-aminoethanethioate + 2-iminoacetate + 1-deoxy-D-xylulose 5-phosphate = [ThiS sulfur-carrier protein]-C-terminal Gly-Gly + 2-[(2R,5Z)-2-carboxy-4-methylthiazol-5(2H)-ylidene]ethyl phosphate + 2 H2O + H(+). It functions in the pathway cofactor biosynthesis; thiamine diphosphate biosynthesis. Functionally, catalyzes the rearrangement of 1-deoxy-D-xylulose 5-phosphate (DXP) to produce the thiazole phosphate moiety of thiamine. Sulfur is provided by the thiocarboxylate moiety of the carrier protein ThiS. In vitro, sulfur can be provided by H(2)S. This is Thiazole synthase from Magnetococcus marinus (strain ATCC BAA-1437 / JCM 17883 / MC-1).